Here is a 446-residue protein sequence, read N- to C-terminus: ATP synthase subunit b-delta (446 aa).

The ATP synthase subunit b stretch occupies residues M1–L168. Residues F4–P24 traverse the membrane as a helical segment. The interval L169–D446 is ATP synthase subunit delta.

It in the N-terminal section; belongs to the ATPase B chain family. In the C-terminal section; belongs to the ATPase delta chain family. F-type ATPases have 2 components, F(1) - the catalytic core - and F(0) - the membrane proton channel. F(1) has five subunits: alpha(3), beta(3), gamma(1), delta(1), epsilon(1). F(0) has three main subunits: a(1), b(2) and c(10-14). The alpha and beta chains form an alternating ring which encloses part of the gamma chain. F(1) is attached to F(0) by a central stalk formed by the gamma and epsilon chains, while a peripheral stalk is formed by the delta and b chains.

The protein localises to the cell membrane. F(1)F(0) ATP synthase produces ATP from ADP in the presence of a proton or sodium gradient. F-type ATPases consist of two structural domains, F(1) containing the extramembraneous catalytic core and F(0) containing the membrane proton channel, linked together by a central stalk and a peripheral stalk. During catalysis, ATP synthesis in the catalytic domain of F(1) is coupled via a rotary mechanism of the central stalk subunits to proton translocation. Functionally, this fusion protein includes a component of the F(0) channel (subunit b) and of the F(1) subunit (subunit delta). Two copies of subunit b and one of delta together form the peripheral 'stator' stalk which links F(1) to F(0). This Mycobacterium leprae (strain Br4923) protein is ATP synthase subunit b-delta (atpFH).